The sequence spans 256 residues: Imidazole glycerol phosphate synthase subunit HisF (256 aa).

Residues aspartate 11 and aspartate 130 contribute to the active site.

The protein belongs to the HisA/HisF family. In terms of assembly, heterodimer of HisH and HisF.

Its subcellular location is the cytoplasm. It catalyses the reaction 5-[(5-phospho-1-deoxy-D-ribulos-1-ylimino)methylamino]-1-(5-phospho-beta-D-ribosyl)imidazole-4-carboxamide + L-glutamine = D-erythro-1-(imidazol-4-yl)glycerol 3-phosphate + 5-amino-1-(5-phospho-beta-D-ribosyl)imidazole-4-carboxamide + L-glutamate + H(+). It participates in amino-acid biosynthesis; L-histidine biosynthesis; L-histidine from 5-phospho-alpha-D-ribose 1-diphosphate: step 5/9. Functionally, IGPS catalyzes the conversion of PRFAR and glutamine to IGP, AICAR and glutamate. The HisF subunit catalyzes the cyclization activity that produces IGP and AICAR from PRFAR using the ammonia provided by the HisH subunit. This is Imidazole glycerol phosphate synthase subunit HisF from Prochlorococcus marinus (strain NATL2A).